The following is a 32-amino-acid chain: U3-cyrtautoxin-As1a (32 aa).

3 cysteine pairs are disulfide-bonded: cysteine 4–cysteine 19, cysteine 11–cysteine 24, and cysteine 18–cysteine 29.

The protein belongs to the neurotoxin 14 (magi-1) family. It to aptotoxin III. As to expression, expressed by the venom gland.

Its subcellular location is the secreted. Is both paralytic and lethal, when injected into lepidopteran larvae. Is a slower acting toxin, being lethal at 24 hours, but not paralytic at 1 hour post-injection. In Apomastus schlingeri (Trap-door spider), this protein is U3-cyrtautoxin-As1a.